Consider the following 302-residue polypeptide: N-acetylmuramic acid 6-phosphate etherase (302 aa).

The SIS domain maps to 58-221; that stretch reads IGESFLNGGR…STGAMVKTGK (164 aa). Glutamate 86 acts as the Proton donor in catalysis. Glutamate 117 is a catalytic residue.

The protein belongs to the GCKR-like family. MurNAc-6-P etherase subfamily. In terms of assembly, homodimer.

It carries out the reaction N-acetyl-D-muramate 6-phosphate + H2O = N-acetyl-D-glucosamine 6-phosphate + (R)-lactate. The protein operates within amino-sugar metabolism; N-acetylmuramate degradation. Functionally, specifically catalyzes the cleavage of the D-lactyl ether substituent of MurNAc 6-phosphate, producing GlcNAc 6-phosphate and D-lactate. In Clostridium botulinum (strain Okra / Type B1), this protein is N-acetylmuramic acid 6-phosphate etherase.